The following is a 206-amino-acid chain: Geminin (206 aa).

The segment covering 1 to 18 (MNLSMKQKQEGAQENVKN) has biased composition (polar residues). Positions 1–42 (MNLSMKQKQEGAQENVKNSPVPRRTLKMIQPSADGSLVGREN) are disordered. The residue at position 27 (K27) is an N6-acetyllysine. 3 positions are modified to phosphoserine: S36, S63, and S64. A necessary and sufficient for interaction with IDAS and CDT1 region spans residues 79 to 158 (TQEAFDLISK…AEVIERLSNE (80 aa)). Residues 91-141 (PSSQYWKEVAEQRRKALYEALKENEKLHKEIEQKDSEIARLRKENKDLAEV) adopt a coiled-coil conformation. Residues 157-206 (NEPLDNFESPDSQEFDSEEEAVEYSELEDSGAGTCAEETVSSSTDARPCT) form a disordered region. Residues 167–185 (DSQEFDSEEEAVEYSELED) are compositionally biased toward acidic residues. Positions 167–187 (DSQEFDSEEEAVEYSELEDSG) are homeodomain binding. Position 181 is a phosphoserine; by CK2 (S181). A compositionally biased stretch (polar residues) spans 195–206 (TVSSSTDARPCT).

The protein belongs to the geminin family. As to quaternary structure, homotetramer. Interacts with CDT1; this inhibits binding of the MCM complex to origins of replication. The complex with CDT1 exists in two forms, a 'permissive' heterotrimer and an 'inhibitory' heterohexamer. Interacts (via coiled-coil domain) with IDAS (via coiled-coil domain); this targets GMNN to the nucleus. The heterodimer formed by GMNN and MCIDAS has much lower affinity for CDT1 than the GMNN homodimer. Interacts with a subset of Hox proteins, affinity increasing from anterior to posterior types, the strongest interaction being with HOXB1, HOXC9 and HOXD10. Interacts with LRWD1 from G1/S to mitosis. Post-translationally, phosphorylated during mitosis. Phosphorylation at Ser-181 by CK2 results in enhanced binding to Hox proteins and more potent inhibitory effect on Hox transcriptional activity.

Its subcellular location is the cytoplasm. The protein localises to the nucleus. In terms of biological role, inhibits DNA replication by preventing the incorporation of MCM complex into pre-replication complex (pre-RC). It is degraded during the mitotic phase of the cell cycle. Its destruction at the metaphase-anaphase transition permits replication in the succeeding cell cycle. Inhibits histone acetyltransferase activity of KAT7/HBO1 in a CDT1-dependent manner, inhibiting histone H4 acetylation and DNA replication licensing. Inhibits the transcriptional activity of a subset of Hox proteins, enrolling them in cell proliferative control. In Mus musculus (Mouse), this protein is Geminin (Gmnn).